A 346-amino-acid chain; its full sequence is Large ribosomal subunit protein uL10 (346 aa).

The segment at 305 to 346 is disordered; sequence EVPAAPAPEAKEEKKEEAEEEEEEKKEVSEEDLSAGLGALFG. Acidic residues predominate over residues 322 to 337; the sequence is AEEEEEEKKEVSEEDL.

The protein belongs to the universal ribosomal protein uL10 family. As to quaternary structure, part of the 50S ribosomal subunit. Forms part of the ribosomal stalk which helps the ribosome interact with GTP-bound translation factors. Forms a heptameric L10(L12)2(L12)2(L12)2 complex, where L10 forms an elongated spine to which the L12 dimers bind in a sequential fashion.

Its function is as follows. Forms part of the ribosomal stalk, playing a central role in the interaction of the ribosome with GTP-bound translation factors. This Ignicoccus hospitalis (strain KIN4/I / DSM 18386 / JCM 14125) protein is Large ribosomal subunit protein uL10.